Consider the following 64-residue polypeptide: MKVNDRVTVKTDGGPRRPGVVLAVEEFSEGIMYLVSLEDYPLGIWFFNESGHQDGIFVEKAEQD.

This sequence belongs to the DsrB family.

In Salmonella arizonae (strain ATCC BAA-731 / CDC346-86 / RSK2980), this protein is Protein DsrB.